Consider the following 103-residue polypeptide: N(4)-acetylcytidine amidohydrolase (103 aa).

Positions 6–100 (ITFFQRFQED…AEDRFYVIEF (95 aa)) constitute an ASCH domain. Catalysis depends on Lys-21, which acts as the Proton acceptor. The active-site Nucleophile is the Thr-24. Glu-74 functions as the Proton donor in the catalytic mechanism.

It belongs to the N(4)-acetylcytidine amidohydrolase family.

It carries out the reaction N(4)-acetylcytidine + H2O = cytidine + acetate + H(+). The enzyme catalyses N(4)-acetyl-2'-deoxycytidine + H2O = 2'-deoxycytidine + acetate + H(+). It catalyses the reaction N(4)-acetylcytosine + H2O = cytosine + acetate + H(+). In terms of biological role, catalyzes the hydrolysis of N(4)-acetylcytidine (ac4C). This Klebsiella pneumoniae (strain 342) protein is N(4)-acetylcytidine amidohydrolase.